A 393-amino-acid polypeptide reads, in one-letter code: Methylthioribose kinase (393 aa).

Residues asparagine 38, lysine 53, and 107-109 (EDL) contribute to the ATP site. Aspartate 225 contributes to the substrate binding site. 242–244 (DPE) lines the ATP pocket. Arginine 332 contributes to the substrate binding site.

It belongs to the methylthioribose kinase family. In terms of assembly, homodimer.

The catalysed reaction is 5-(methylsulfanyl)-D-ribose + ATP = 5-(methylsulfanyl)-alpha-D-ribose 1-phosphate + ADP + H(+). It functions in the pathway amino-acid biosynthesis; L-methionine biosynthesis via salvage pathway; S-methyl-5-thio-alpha-D-ribose 1-phosphate from S-methyl-5'-thioadenosine (hydrolase route): step 2/2. In terms of biological role, catalyzes the phosphorylation of methylthioribose into methylthioribose-1-phosphate. This is Methylthioribose kinase from Bacillus cereus (strain B4264).